The primary structure comprises 66 residues: MSEEKLKSKIEQASGGLKEGAGKLTGDKELEAKGFVEKTIAKGKELADDAKEAVEGAVDAVKEKLK.

The segment covering 1–10 (MSEEKLKSKI) has biased composition (basic and acidic residues). The segment at 1 to 23 (MSEEKLKSKIEQASGGLKEGAGK) is disordered.

It belongs to the UPF0337 (CsbD) family.

This is UPF0337 protein SpyM3_1723 from Streptococcus pyogenes serotype M3 (strain ATCC BAA-595 / MGAS315).